Consider the following 433-residue polypeptide: Histidinol dehydrogenase (433 aa).

NAD(+) is bound by residues Tyr-129, Gln-191, and Asn-214. Residues Ser-237, Gln-259, and His-262 each contribute to the substrate site. Zn(2+) is bound by residues Gln-259 and His-262. Catalysis depends on proton acceptor residues Glu-326 and His-327. Substrate contacts are provided by His-327, Asp-360, Glu-414, and His-419. Asp-360 contacts Zn(2+). Residue His-419 coordinates Zn(2+).

This sequence belongs to the histidinol dehydrogenase family. Zn(2+) serves as cofactor.

The catalysed reaction is L-histidinol + 2 NAD(+) + H2O = L-histidine + 2 NADH + 3 H(+). It participates in amino-acid biosynthesis; L-histidine biosynthesis; L-histidine from 5-phospho-alpha-D-ribose 1-diphosphate: step 9/9. In terms of biological role, catalyzes the sequential NAD-dependent oxidations of L-histidinol to L-histidinaldehyde and then to L-histidine. The sequence is that of Histidinol dehydrogenase from Methanosarcina mazei (strain ATCC BAA-159 / DSM 3647 / Goe1 / Go1 / JCM 11833 / OCM 88) (Methanosarcina frisia).